Reading from the N-terminus, the 84-residue chain is Putative defensin-like protein 139 (84 aa).

The first 28 residues, 1–28, serve as a signal peptide directing secretion; that stretch reads MEPSNQIFFYLRRSKLLSGLGEIRMAKG. Intrachain disulfides connect cysteine 37–cysteine 81, cysteine 46–cysteine 65, cysteine 51–cysteine 75, and cysteine 55–cysteine 77.

This sequence belongs to the DEFL family.

The protein localises to the secreted. This chain is Putative defensin-like protein 139 (LCR7), found in Arabidopsis thaliana (Mouse-ear cress).